A 227-amino-acid polypeptide reads, in one-letter code: Phosphoglycolate phosphatase (227 aa).

The active-site Nucleophile is aspartate 14. The Mg(2+) site is built by aspartate 14, aspartate 16, and aspartate 177.

Belongs to the HAD-like hydrolase superfamily. CbbY/CbbZ/Gph/YieH family. Mg(2+) serves as cofactor.

The catalysed reaction is 2-phosphoglycolate + H2O = glycolate + phosphate. It participates in organic acid metabolism; glycolate biosynthesis; glycolate from 2-phosphoglycolate: step 1/1. In terms of biological role, specifically catalyzes the dephosphorylation of 2-phosphoglycolate. Is involved in the dissimilation of the intracellular 2-phosphoglycolate formed during the DNA repair of 3'-phosphoglycolate ends, a major class of DNA lesions induced by oxidative stress. The sequence is that of Phosphoglycolate phosphatase from Thiobacillus denitrificans (strain ATCC 25259 / T1).